The following is a 594-amino-acid chain: MFGRTYYCGEITEKAIGEKVVLKGWVQKRRDLGGLIFIDLRDRTGIVQVVFSPEVSKEALNVAEKVRNEYVLSVEGTVVAREEGTINPNLPTGKIEIQAERITIINEAKTPPFVITDQTDVAEEVRLKYRYLDLRRPVMFRTLQLRHRVTKAIRDFLDGEGFLEVETPILTKSTPEGARDYLVPSRVHPGEFYALPQSPQIFKQLLMVAGFERYYQIARCFRDEDLRADRQPEFTQIDIETSFMSQEEIMQLTERMMAYVMKMAKGIDISLPFPRMSYDEAISRYGSDKPDTRFGLELVDVSEIVKNSSFKVFAGAIANGGQVKAINVKGAADQYSRKDIDALAEFVARYGAKGLAWLKVEEDGLKGPIAKFFTEEEQNGLIRTLEAEAGDLLLFVADHKTVVANALGALRVKLGKDLNLIDETKFNFLWITDWPLLEYDEEDGRYYAAHHPFTMPVREDLPQLETNPEKVRAQAYDLVLNGYELGGGSMRIFEREVQEKMFRALGFTEEEARKQFGFLLEAFEYGTPPHGGIALGLDRLVMLLAGRTNLRDTIAFPKTASASCLLTEAPSPVSEQQLEELHLVVNSEKKSEQY.

Glutamate 176 contributes to the L-aspartate binding site. An aspartate region spans residues 200–203 (QIFK). An L-aspartate-binding site is contributed by arginine 222. Residues 222 to 224 (RDE) and glutamine 231 contribute to the ATP site. Residue histidine 450 coordinates L-aspartate. Glutamate 484 is an ATP binding site. Position 491 (arginine 491) interacts with L-aspartate. 536 to 539 (GLDR) contacts ATP.

This sequence belongs to the class-II aminoacyl-tRNA synthetase family. Type 1 subfamily. Homodimer.

Its subcellular location is the cytoplasm. It carries out the reaction tRNA(Asx) + L-aspartate + ATP = L-aspartyl-tRNA(Asx) + AMP + diphosphate. Functionally, aspartyl-tRNA synthetase with relaxed tRNA specificity since it is able to aspartylate not only its cognate tRNA(Asp) but also tRNA(Asn). Reaction proceeds in two steps: L-aspartate is first activated by ATP to form Asp-AMP and then transferred to the acceptor end of tRNA(Asp/Asn). This Geobacillus sp. (strain WCH70) protein is Aspartate--tRNA(Asp/Asn) ligase.